The following is a 510-amino-acid chain: NAD(P)H-quinone oxidoreductase subunit 2 B, chloroplastic (510 aa).

Helical transmembrane passes span Leu24 to Leu44, Ile57 to Phe77, Ile99 to Ile119, Met124 to Cys144, Leu149 to Tyr169, Tyr183 to Gly203, Pro227 to Ala247, Trp295 to Ile315, Met323 to Asp343, Tyr354 to Leu374, Ala395 to Phe415, Leu418 to Leu438, and Met484 to Ile504.

It belongs to the complex I subunit 2 family. In terms of assembly, NDH is composed of at least 16 different subunits, 5 of which are encoded in the nucleus.

The protein localises to the plastid. Its subcellular location is the chloroplast thylakoid membrane. The catalysed reaction is a plastoquinone + NADH + (n+1) H(+)(in) = a plastoquinol + NAD(+) + n H(+)(out). It carries out the reaction a plastoquinone + NADPH + (n+1) H(+)(in) = a plastoquinol + NADP(+) + n H(+)(out). In terms of biological role, NDH shuttles electrons from NAD(P)H:plastoquinone, via FMN and iron-sulfur (Fe-S) centers, to quinones in the photosynthetic chain and possibly in a chloroplast respiratory chain. The immediate electron acceptor for the enzyme in this species is believed to be plastoquinone. Couples the redox reaction to proton translocation, and thus conserves the redox energy in a proton gradient. This chain is NAD(P)H-quinone oxidoreductase subunit 2 B, chloroplastic, found in Gossypium hirsutum (Upland cotton).